The sequence spans 94 residues: Co-chaperonin GroES (94 aa).

Belongs to the GroES chaperonin family. In terms of assembly, heptamer of 7 subunits arranged in a ring. Interacts with the chaperonin GroEL.

It localises to the cytoplasm. Functionally, together with the chaperonin GroEL, plays an essential role in assisting protein folding. The GroEL-GroES system forms a nano-cage that allows encapsulation of the non-native substrate proteins and provides a physical environment optimized to promote and accelerate protein folding. GroES binds to the apical surface of the GroEL ring, thereby capping the opening of the GroEL channel. In Listeria monocytogenes serotype 4b (strain CLIP80459), this protein is Co-chaperonin GroES.